Reading from the N-terminus, the 92-residue chain is Small ribosomal subunit protein uS15 (92 aa).

The protein belongs to the universal ribosomal protein uS15 family. In terms of assembly, part of the 30S ribosomal subunit. Forms a bridge to the 50S subunit in the 70S ribosome, contacting the 23S rRNA.

One of the primary rRNA binding proteins, it binds directly to 16S rRNA where it helps nucleate assembly of the platform of the 30S subunit by binding and bridging several RNA helices of the 16S rRNA. Functionally, forms an intersubunit bridge (bridge B4) with the 23S rRNA of the 50S subunit in the ribosome. The sequence is that of Small ribosomal subunit protein uS15 from Symbiobacterium thermophilum (strain DSM 24528 / JCM 14929 / IAM 14863 / T).